A 406-amino-acid chain; its full sequence is MSYEKLLERFLTYVKINTRSNPNSTQTPTTQSQVDFALTVLKPEMEAIGLKDVHYLPSNGYLVGTLPATSDRLRHKIGFISHMDTADFNAENITPQIVDYKGGDIELGDSGYILSPKDFPNLNNYHGQTLITTDGKTLLGADDKSGIAEIMTAMEYLASHPEIEHCEIRVGFGPDEEIGIGADKFDVKDFDVDFAYTVDGGPLGELQYETFSAAGLELTFEGRNVHPGTAKNQMINALQLAMDFHSQLPENERPEQTDDYQGFYHLYDLSGTVDQAKSSYIIRDFEEVDFLKRKQLAQDIADNMNEALQSERVKVKLYDQYYNMKKVIEKDMTPINIAKEVMEELDIKPIIEPIRGGTDGSKISFMGIPTPNLFAGGENMHGRFEFVSLQTMEKAVDVILGIVAKD.

His82 contacts Zn(2+). Asp84 is a catalytic residue. Asp142 lines the Zn(2+) pocket. Catalysis depends on Glu176, which acts as the Proton acceptor. Zn(2+)-binding residues include Glu177, Asp199, and His381.

This sequence belongs to the peptidase M20B family. Zn(2+) is required as a cofactor.

It localises to the cytoplasm. The enzyme catalyses Release of the N-terminal residue from a tripeptide.. In terms of biological role, cleaves the N-terminal amino acid of tripeptides. In Streptococcus agalactiae serotype Ia (strain ATCC 27591 / A909 / CDC SS700), this protein is Peptidase T.